A 481-amino-acid polypeptide reads, in one-letter code: Polygalacturonase QRT3 (481 aa).

Residues 1-27 (MELRKSQVAMPVFLAIMSLMVSQVVFA) form the signal peptide. PbH1 repeat units follow at residues 203–226 (SLRT…LVKS), 261–282 (GNDN…MVSG), and 356–377 (IRGV…QIVQ). 2 N-linked (GlcNAc...) asparagine glycosylation sites follow: N415 and N455.

The protein belongs to the glycosyl hydrolase 28 family. In terms of tissue distribution, expressed in the tapetum cells in the anthers and in the ovules of open flowers.

The protein resides in the secreted. Its subcellular location is the cell wall. It carries out the reaction (1,4-alpha-D-galacturonosyl)n+m + H2O = (1,4-alpha-D-galacturonosyl)n + (1,4-alpha-D-galacturonosyl)m.. In terms of biological role, polygalacturonase required for degrading the pollen mother cell wall during microspore development. The chain is Polygalacturonase QRT3 (QRT3) from Arabidopsis thaliana (Mouse-ear cress).